Consider the following 82-residue polypeptide: Escargot/snail protein homolog (82 aa).

4 consecutive C2H2-type zinc fingers follow at residues 1–5, 18–40, 44–66, and 72–82; these read HLQFH, FSCKLCDKVYTSLGALKMHIRTH, CKCDICHKAFSRPWLLQGHIRTH, and FSCQHCHRAFA.

This sequence belongs to the snail C2H2-type zinc-finger protein family.

The protein localises to the nucleus. In Bradysia coprophila (Dark-winged fungus gnat), this protein is Escargot/snail protein homolog.